Consider the following 221-residue polypeptide: Adenylate kinase (221 aa).

Residue 10-15 (GAGKGT) coordinates ATP. The interval 30 to 59 (STGDMLRAAVKAGTEFGVAAKKIMDAGGLV) is NMP. AMP is bound by residues Thr31, Arg36, 57–59 (GLV), 85–88 (GFPR), and Gln92. Positions 122 to 159 (GRRVHPASGRTYHIKYNPPKVEGKDDVTGDALIQRDDD) are LID. Residues Arg123 and 132–133 (TY) contribute to the ATP site. AMP is bound by residues Arg156 and Arg167. Gly207 serves as a coordination point for ATP.

Belongs to the adenylate kinase family. In terms of assembly, monomer.

The protein localises to the cytoplasm. The enzyme catalyses AMP + ATP = 2 ADP. The protein operates within purine metabolism; AMP biosynthesis via salvage pathway; AMP from ADP: step 1/1. Its function is as follows. Catalyzes the reversible transfer of the terminal phosphate group between ATP and AMP. Plays an important role in cellular energy homeostasis and in adenine nucleotide metabolism. This chain is Adenylate kinase, found in Polynucleobacter asymbioticus (strain DSM 18221 / CIP 109841 / QLW-P1DMWA-1) (Polynucleobacter necessarius subsp. asymbioticus).